Consider the following 647-residue polypeptide: NADP-dependent malic enzyme, chloroplastic (647 aa).

A chloroplast-targeting transit peptide spans 1-61 (MMSLNSSSVV…VDGAVKDVNA (61 aa)). Residue Tyr-195 is the Proton donor of the active site. An NAD(+)-binding site is contributed by Arg-248. The Proton acceptor role is filled by Lys-266. Residues Glu-338, Asp-339, and Asp-362 each coordinate a divalent metal cation. Asp-362 is a binding site for NAD(+). 391–407 (LFLGAGEAGTGIAELIA) provides a ligand contact to NADP(+). Asn-503 contacts NAD(+).

Belongs to the malic enzymes family. Homotetramer. The cofactor is Mg(2+). It depends on Mn(2+) as a cofactor.

It localises to the plastid. The protein localises to the chloroplast. It catalyses the reaction (S)-malate + NADP(+) = pyruvate + CO2 + NADPH. The catalysed reaction is oxaloacetate + H(+) = pyruvate + CO2. It participates in photosynthesis; C3 acid pathway. Its function is as follows. The chloroplastic ME isoform decarboxylates malate shuttled from neighboring mesophyll cells. The CO(2) released is then refixed by ribulose-bisphosphate carboxylase. This pathway eliminates the photorespiratory loss of CO(2) that occurs in most plants. This chain is NADP-dependent malic enzyme, chloroplastic (MODA), found in Flaveria pringlei.